Here is a 347-residue protein sequence, read N- to C-terminus: Subtilase cytotoxin subunit A (347 aa).

The N-terminal stretch at M1–A21 is a signal peptide. One can recognise a Peptidase S8 domain in the interval P24–I327. Active-site charge relay system residues include D52, H89, and S272. A disulfide bridge connects residues C288 and C331. Residues N322 to L347 form an A2 domain region. Positions S344–L347 match the Prevents secretion from ER motif.

The protein belongs to the peptidase S8 family. As to quaternary structure, forms a complex with SubB with the stoichiometry SubA1:SubB5 (called SubAB5).

The protein localises to the secreted. Its subcellular location is the host cytoplasm. The protein resides in the host cytosol. It is found in the host endoplasmic reticulum lumen. Functionally, protease subunit of subtilase cytotoxin SubAB5. An endoprotease specific for host endoplasmic reticulum (ER) chaperone BiP/HSPA5, has no activity on human HSP70 or HSPA8. Cleaves between 'Leu-416' and 'Leu-417' of BiP/HSPA5 in the hinge between BiP's ATPase and protein-binding domains. This induces host ER stress response and eventual cell death. Culture supernatant of E.coli expressing both subA and subB are toxic for Vero cells (African green monkey kidney cell line), Chinese hamster ovary cells and Hct-8 cells (human colonic epithelial cell line); the subunits are not toxic individually. Purified SubAB5 is highly toxic, &lt;0.1 pg is able to kill at least 50% of 30'000 Vero cells in a microtiter plate assay after 3 days; no cytotoxicity is seen at 24 hours. Preabsorption with cells expressing a ganglioside GM2 mimic reduced cytotoxicity of SubAB5 by 93% in the Vero cytotoxicity assay. Intraperitoneal injection of 200 ng of purified SubAB5 kills mice; the higher the dose the faster the mice die. Animals injected intraperitoneally with purified SubAB5 have microvascular thrombi in the brain and other organs, including the renal tubules and glomeruli. Injection induces an unfolded response in mice. Mice fed E.coli cells expressing cloned SubAB5 experience drastic weight loss and appear ill and lethargic. Protein synthesis in Vero cells is transiently inhibited by SubAB5; both subunits are required for this effect. Inhibition of protein synthesis is prevented by brefeldin A; cells are arrested in the G1 phase. SubAB5 at 100 ng/ml induced caspase-dependent apoptosis in Vero cells through mitochondrial membrane damage. This chain is Subtilase cytotoxin subunit A, found in Escherichia coli.